A 340-amino-acid chain; its full sequence is tRNA N6-adenosine threonylcarbamoyltransferase (340 aa).

Residues histidine 115 and histidine 119 each coordinate Fe cation. Substrate is bound by residues 137–141, aspartate 170, glycine 183, aspartate 187, and asparagine 276; that span reads IVSGG. Residue aspartate 304 coordinates Fe cation.

Belongs to the KAE1 / TsaD family. Fe(2+) is required as a cofactor.

It localises to the cytoplasm. It catalyses the reaction L-threonylcarbamoyladenylate + adenosine(37) in tRNA = N(6)-L-threonylcarbamoyladenosine(37) in tRNA + AMP + H(+). Functionally, required for the formation of a threonylcarbamoyl group on adenosine at position 37 (t(6)A37) in tRNAs that read codons beginning with adenine. Is involved in the transfer of the threonylcarbamoyl moiety of threonylcarbamoyl-AMP (TC-AMP) to the N6 group of A37, together with TsaE and TsaB. TsaD likely plays a direct catalytic role in this reaction. This is tRNA N6-adenosine threonylcarbamoyltransferase from Staphylococcus epidermidis (strain ATCC 35984 / DSM 28319 / BCRC 17069 / CCUG 31568 / BM 3577 / RP62A).